Here is a 219-residue protein sequence, read N- to C-terminus: Ribose-5-phosphate isomerase A (219 aa).

Substrate is bound by residues 28 to 31 (SGST), 81 to 84 (DGAD), and 94 to 97 (KGGG). Residue Glu-103 is the Proton acceptor of the active site. Lys-121 contacts substrate.

This sequence belongs to the ribose 5-phosphate isomerase family. Homodimer.

The catalysed reaction is aldehydo-D-ribose 5-phosphate = D-ribulose 5-phosphate. It functions in the pathway carbohydrate degradation; pentose phosphate pathway; D-ribose 5-phosphate from D-ribulose 5-phosphate (non-oxidative stage): step 1/1. Functionally, catalyzes the reversible conversion of ribose-5-phosphate to ribulose 5-phosphate. The protein is Ribose-5-phosphate isomerase A of Pasteurella multocida (strain Pm70).